We begin with the raw amino-acid sequence, 659 residues long: RNA-binding protein MIP6 (659 aa).

Over residues 1–27 the composition is skewed to polar residues; the sequence is MPNSHGNVLNNISLNSKQNPRSISKSC. Positions 1–35 are disordered; sequence MPNSHGNVLNNISLNSKQNPRSISKSCPNDKDARQ. RRM domains are found at residues 111 to 189, 199 to 267, and 313 to 389; these read NSLF…PSMK, TNVF…GNKI, and KTIL…PGKD.

As to quaternary structure, interacts with MEX67.

Its subcellular location is the cytoplasm. In Saccharomyces cerevisiae (strain ATCC 204508 / S288c) (Baker's yeast), this protein is RNA-binding protein MIP6 (MIP6).